The primary structure comprises 160 residues: Large ribosomal subunit protein eL29 (160 aa).

A compositionally biased stretch (basic residues) spans 1–26 (MAKSKNHTTHNQSRKWHRNGIKKPRS). The segment at 1-32 (MAKSKNHTTHNQSRKWHRNGIKKPRSQRYESL) is disordered. Residue Lys-5 is modified to N6-methyllysine. At Ser-31 the chain carries Phosphoserine. Lys-33 carries the N6-acetyllysine modification. The tract at residues 119-160 (CRPKSQAKAQSKAKATAGGTAAAPVPPASAPKGAQAPTKAPQ) is disordered. Over residues 121–141 (PKSQAKAQSKAKATAGGTAAA) the composition is skewed to low complexity.

The protein belongs to the eukaryotic ribosomal protein eL29 family. In terms of assembly, component of the large ribosomal subunit.

It localises to the cytoplasm. In terms of biological role, component of the large ribosomal subunit. The ribosome is a large ribonucleoprotein complex responsible for the synthesis of proteins in the cell. The protein is Large ribosomal subunit protein eL29 (RPL29) of Sus scrofa (Pig).